The following is a 128-amino-acid chain: uncharacterized protein (128 aa).

The 124-residue stretch at 5 to 128 (SIHHIAIICS…DQLPLELYEQ (124 aa)) folds into the VOC domain. A divalent metal cation-binding residues include H8, E56, H77, and E124.

This is an uncharacterized protein from Bacillus subtilis (strain 168).